A 461-amino-acid polypeptide reads, in one-letter code: Phosphatidate cytidylyltransferase 1 (461 aa).

The disordered stretch occupies residues 1–67; sequence MLELRHRGSC…IPEIPPSSDR (67 aa). The residue at position 7 (arginine 7) is an Omega-N-methylarginine. Positions 20-56 are enriched in basic and acidic residues; the sequence is PHREGEAAGGDHETESTSDKETDIDDRYGDLDSRTDS. A phosphoserine mark is found at serine 35 and serine 37. 6 helical membrane-spanning segments follow: residues 96–116, 149–169, 183–203, 230–250, 279–299, and 357–377; these read MISL…LLVL, FLLC…FATF, HRFI…LSLV, LVIQ…SSVI, GFIG…YVLS, and IALS…ASGF.

Belongs to the CDS family. In terms of assembly, homodimer. Interacts with FOS; this interaction may enhance catalytic activity. The cofactor is Mg(2+). Expressed in adult tissues such as placenta, brain, small intestine, ovary, testis and prostate. Highly expressed in fetal kidney, lung and brain. Lower level in fetal liver.

It localises to the endoplasmic reticulum membrane. The enzyme catalyses a 1,2-diacyl-sn-glycero-3-phosphate + CTP + H(+) = a CDP-1,2-diacyl-sn-glycerol + diphosphate. It carries out the reaction 1-octadecanoyl-2-(5Z,8Z,11Z,14Z-eicosatetraenoyl)-sn-glycero-3-phosphate + CTP + H(+) = 1-octadecanoyl-2-(5Z,8Z,11Z,14Z-eicosatetraenoyl)-sn-glycero-3-cytidine-5'-diphosphate + diphosphate. It catalyses the reaction 1-octadecanoyl-2-(9Z,12Z-octadecadienoyl)-sn-glycero-3-phosphate + CTP + H(+) = 1-octadecanoyl-2-(9Z,12Z-octadecadienoyl)-sn-glycero-3-cytidine-5'-diphosphate + diphosphate. The catalysed reaction is 1-hexadecanoyl-2-(5Z,8Z,11Z,14Z-eicosatetraenoyl)-sn-glycero-3-phosphate + CTP + H(+) = 1-hexadecanoyl-2-(5Z,8Z,11Z,14Z-eicosatetraenoyl)-sn-glycero-3-cytidine-5'-diphosphate + diphosphate. The enzyme catalyses 1,2-di-(5Z,8Z,11Z,14Z)-eicosatetraenoyl-sn-glycero-3-phosphate + CTP + H(+) = 1,2-di-(5Z,8Z,11Z,14Z-eicosatetraenoyl)-sn-glycero-3-cytidine-5'-diphosphate + diphosphate. It carries out the reaction 1-octadecanoyl-2-(9Z-octadecenoyl)-sn-glycero-3-phosphate + CTP + H(+) = 1-octadecanoyl-2-(9Z-octadecenoyl)-sn-glycero-3-cytidine-5'-diphosphate + diphosphate. It catalyses the reaction 1-octadecanoyl-2-(4Z,7Z,10Z,13Z,16Z,19Z-docosahexaenoyl)-sn-glycero-3-phosphate + CTP + H(+) = 1-octadecanoyl-2-(4Z,7Z,10Z,13Z,16Z,19Z-docosahexaenoyl)-sn-glycero-3-cytidine-5'-diphosphate + diphosphate. The catalysed reaction is 1,2-di-(9Z,12Z-octadecadienoyl)-sn-glycero-3-phosphate + CTP + H(+) = 1,2-di-(9Z,12Z-octadecadienoyl)-sn-glycero-3-cytidine-5'-diphosphate + diphosphate. The enzyme catalyses 1,2-di-(9Z-octadecenoyl)-sn-glycero-3-phosphate + CTP + H(+) = 1,2-di-(9Z-octadecenoyl)-sn-glycero-3-cytidine-5'-diphosphate + diphosphate. It functions in the pathway phospholipid metabolism; CDP-diacylglycerol biosynthesis; CDP-diacylglycerol from sn-glycerol 3-phosphate: step 3/3. With respect to regulation, inhibited by its anionic phospholipid end products, with phosphatidylinositol-(4,5)- bisphosphate showing the strongest inhibition. Its function is as follows. Catalyzes the conversion of phosphatidic acid (PA) to CDP-diacylglycerol (CDP-DAG), an essential intermediate in the synthesis of phosphatidylglycerol, cardiolipin and phosphatidylinositol. Exhibits almost no acyl chain preference for PA, showing no discrimination for the sn-1/sn-2 acyl chain composition of PAs. Plays an important role in regulating the growth of lipid droplets which are storage organelles at the center of lipid and energy homeostasis. Positively regulates the differentiation and development of adipocytes. This is Phosphatidate cytidylyltransferase 1 from Homo sapiens (Human).